The primary structure comprises 104 residues: UPF0145 protein HCH_01985 (104 aa).

This sequence belongs to the UPF0145 family.

This is UPF0145 protein HCH_01985 from Hahella chejuensis (strain KCTC 2396).